Consider the following 246-residue polypeptide: uncharacterized protein (246 aa).

Disordered stretches follow at residues serine 29–serine 54, leucine 93–phenylalanine 114, and proline 148–isoleucine 246. The segment covering proline 35–serine 49 has biased composition (low complexity). Residues arginine 172–valine 183 show a composition bias toward polar residues. Low complexity-rich tracts occupy residues serine 190–serine 203 and serine 214–serine 225. Residue asparagine 219 is glycosylated (N-linked (GlcNAc...) asparagine). Polar residues predominate over residues leucine 235–isoleucine 246.

This is an uncharacterized protein from Caenorhabditis elegans.